We begin with the raw amino-acid sequence, 95 residues long: Aspartyl/glutamyl-tRNA(Asn/Gln) amidotransferase subunit C (95 aa).

Belongs to the GatC family. Heterotrimer of A, B and C subunits.

The catalysed reaction is L-glutamyl-tRNA(Gln) + L-glutamine + ATP + H2O = L-glutaminyl-tRNA(Gln) + L-glutamate + ADP + phosphate + H(+). It carries out the reaction L-aspartyl-tRNA(Asn) + L-glutamine + ATP + H2O = L-asparaginyl-tRNA(Asn) + L-glutamate + ADP + phosphate + 2 H(+). Functionally, allows the formation of correctly charged Asn-tRNA(Asn) or Gln-tRNA(Gln) through the transamidation of misacylated Asp-tRNA(Asn) or Glu-tRNA(Gln) in organisms which lack either or both of asparaginyl-tRNA or glutaminyl-tRNA synthetases. The reaction takes place in the presence of glutamine and ATP through an activated phospho-Asp-tRNA(Asn) or phospho-Glu-tRNA(Gln). The protein is Aspartyl/glutamyl-tRNA(Asn/Gln) amidotransferase subunit C of Geobacter sp. (strain M21).